Consider the following 477-residue polypeptide: PTS system glucose-specific EIICB component (477 aa).

Residues 1 to 14 are Cytoplasmic-facing; the sequence is MFKNAFANLQKVGK. In terms of domain architecture, PTS EIIC type-1 spans 1–388; sequence MFKNAFANLQ…LDLKTPGRED (388 aa). Residues 15–35 form a helical membrane-spanning segment; it reads SLMLPVSVLPIAGILLGVGSA. Residues 36–50 lie on the Periplasmic side of the membrane; the sequence is NFSWLPAVVSHVMAE. Residues 51–71 traverse the membrane as a helical segment; that stretch reads AGGSVFANMPLIFAIGVALGF. Residues 72–79 are Cytoplasmic-facing; sequence TNNDGVSA. Residues 80–100 form a helical membrane-spanning segment; that stretch reads LAAVVAYGIMVKTMAVVAPLV. Over 101 to 111 the chain is Periplasmic; sequence LHLPAEEIAAK. The helical transmembrane segment at 112-132 threads the bilayer; the sequence is HLADTGVLGGIISGAIAAYMF. The Cytoplasmic segment spans residues 133-151; sequence NRFYRIKLPEYLGFFAGKR. A helical membrane pass occupies residues 152–172; it reads FVPIISGLAAIFTGVVLSFVW. Residues 173–190 are Periplasmic-facing; sequence PPIGTAIQAFSQWAAYQN. The helical transmembrane segment at 191 to 211 threads the bilayer; it reads PVVAFGIYGFIERCLVPFGLH. Residues 212–248 lie on the Cytoplasmic side of the membrane; that stretch reads HIWNVPFQMQIGEYTNAAGQVFHGDIPRYMAGDPTAG. The helical transmembrane segment at 249-269 threads the bilayer; that stretch reads MLSGGFLFKMYGLPAAAIAIW. Over 270–279 the chain is Periplasmic; it reads HSAKPENRAK. Residues 280–300 form a helical membrane-spanning segment; it reads VGGIMISAALTSFLTGITEPI. The Cytoplasmic portion of the chain corresponds to 301–309; it reads EFSFMFVAP. A helical transmembrane segment spans residues 310–330; sequence ILYIIHAILAGLAFPICILLG. Residues 331–355 are Periplasmic-facing; sequence MRDGTSFSHGLIDFIVLSGNSSKLW. Residues 356-376 traverse the membrane as a helical segment; sequence LFPIVGAGYAIVYYTVFRVLI. Over 377–477 the chain is Cytoplasmic; the sequence is KALDLKTPGR…TEMDEYIRNS (101 aa). In terms of domain architecture, PTS EIIB type-1 spans 399-477; it reads SEMAPALVAA…TEMDEYIRNS (79 aa). Residue Cys-421 is the Phosphocysteine intermediate; for EIIB activity of the active site. Cys-421 carries the phosphocysteine modification.

The protein resides in the cell inner membrane. The catalysed reaction is N(pros)-phospho-L-histidyl-[protein] + D-glucose(out) = D-glucose 6-phosphate(in) + L-histidyl-[protein]. The phosphoenolpyruvate-dependent sugar phosphotransferase system (sugar PTS), a major carbohydrate active transport system, catalyzes the phosphorylation of incoming sugar substrates concomitantly with their translocation across the cell membrane. The enzyme II complex composed of PtsG and Crr is involved in glucose transport. Also functions as a chemoreceptor monitoring the environment for changes in sugar concentration. It can also phosphorylate mannose, methyl alpha-glucoside and 2-deoxy-glucose. The polypeptide is PTS system glucose-specific EIICB component (ptsG) (Salmonella typhimurium (strain LT2 / SGSC1412 / ATCC 700720)).